The chain runs to 401 residues: Probable tRNA sulfurtransferase (401 aa).

A THUMP domain is found at 60-165; that stretch reads EALFPHLKQV…EEATFLTIRD (106 aa). ATP contacts are provided by residues 183 to 184, 208 to 209, Arg265, Gly287, and Gln296; these read ML and HF.

This sequence belongs to the ThiI family.

It is found in the cytoplasm. It catalyses the reaction [ThiI sulfur-carrier protein]-S-sulfanyl-L-cysteine + a uridine in tRNA + 2 reduced [2Fe-2S]-[ferredoxin] + ATP + H(+) = [ThiI sulfur-carrier protein]-L-cysteine + a 4-thiouridine in tRNA + 2 oxidized [2Fe-2S]-[ferredoxin] + AMP + diphosphate. It carries out the reaction [ThiS sulfur-carrier protein]-C-terminal Gly-Gly-AMP + S-sulfanyl-L-cysteinyl-[cysteine desulfurase] + AH2 = [ThiS sulfur-carrier protein]-C-terminal-Gly-aminoethanethioate + L-cysteinyl-[cysteine desulfurase] + A + AMP + 2 H(+). Its pathway is cofactor biosynthesis; thiamine diphosphate biosynthesis. Its function is as follows. Catalyzes the ATP-dependent transfer of a sulfur to tRNA to produce 4-thiouridine in position 8 of tRNAs, which functions as a near-UV photosensor. Also catalyzes the transfer of sulfur to the sulfur carrier protein ThiS, forming ThiS-thiocarboxylate. This is a step in the synthesis of thiazole, in the thiamine biosynthesis pathway. The sulfur is donated as persulfide by IscS. This Bacillus subtilis (strain 168) protein is Probable tRNA sulfurtransferase.